We begin with the raw amino-acid sequence, 80 residues long: Defensin-like protein 51 (80 aa).

Positions 1-27 are cleaved as a signal peptide; it reads MGFTKILVTFFLVGLLVISSSPQNAIA. 4 cysteine pairs are disulfide-bonded: cysteine 39-cysteine 79, cysteine 43-cysteine 66, cysteine 52-cysteine 77, and cysteine 56-cysteine 78.

It belongs to the DEFL family.

It localises to the secreted. The protein is Defensin-like protein 51 (LCR48) of Arabidopsis thaliana (Mouse-ear cress).